The following is a 390-amino-acid chain: Guanine nucleotide exchange factor for Rab-3A (390 aa).

Residues 1-60 form a disordered region; sequence MWSGQPHPDEGHPPPLEAVPVPWKSVGPCKSHRESLGGLPETPAGEEAQGEEGPAATQLD. Over residues 40–58 the composition is skewed to low complexity; that stretch reads PETPAGEEAQGEEGPAATQ. Positions 73–161 form a coiled coil; sequence EKGSEFLKEE…AEVTALKTLV (89 aa). A disordered region spans residues 166–194; sequence PASPNRELHPQLLSPTKAGPRKGHLRHKS. S168 and S179 each carry phosphoserine. Over residues 184–194 the composition is skewed to basic residues; sequence GPRKGHLRHKS.

Belongs to the SEC2 family. Interacts with RAB3A and IHPK1 through the coiled-coil domain. This interaction is competitive. IHPK1 kinase activity is not required for this interaction.

In terms of biological role, guanine nucleotide exchange factor (GEF) which may activate RAB3A, a GTPase that regulates synaptic vesicle exocytosis. Promotes the exchange of GDP to GTP, converting inactive GDP-bound Rab proteins into their active GTP-bound form. May also activate RAB8A and RAB8B. The protein is Guanine nucleotide exchange factor for Rab-3A (RAB3IL1) of Bos taurus (Bovine).